We begin with the raw amino-acid sequence, 595 residues long: Leiomodin-1 (595 aa).

Disordered regions lie at residues 1–69 (MSKV…EAML), 81–322 (QREM…KVKN), and 467–568 (DKQR…QEKN). Residue serine 12 is modified to Phosphoserine. The segment covering 27–40 (EEMEELEKELDVVD) has biased composition (acidic residues). 8 stretches are compositionally biased toward basic and acidic residues: residues 81–110 (QREM…DASR), 117–127 (QDSDLGKEPKK), 134–192 (FSRD…EKTG), 200–223 (SRDK…KLTA), 230–249 (GRRE…KPED), 257–287 (RDWR…KAPE), 467–476 (DKQRQKRLQE), and 484–493 (SGEKKDRLEV). Phosphoserine is present on serine 85. Serine 135 carries the post-translational modification Phosphoserine. 8 tandem repeats follow at residues 165-179 (AAVD…GREE), 180-195 (RAAA…GSVK), 196-211 (NAGL…EEVK), 212-226 (EPSK…AESR), 227-240 (NTVG…LKES), 242-255 (KENK…IGSG), 256-271 (GRDW…KEEN), and 272-288 (QPDK…APEK). Residues 165 to 288 (AAVDRKESGK…EESKTKAPEK (124 aa)) form an 8 X approximate tandem repeats region. Residues 503–522 (SPKPSPQPSPKPAPKNSPKK) are 5 X 4 AA approximate tandem repeats. Pro residues-rich tracts occupy residues 505–517 (KPSP…PAPK) and 527–538 (AAPPPPPPPLAP). Phosphoserine is present on serine 550. The WH2 domain occupies 569–588 (SRDQLLAAIRSSNLKQLKKV).

Belongs to the tropomodulin family. In terms of tissue distribution, detected in aorta, urinary bladder and uterus (at protein level). Detected in smooth muscle cells. Detected in aorta, bladder, colon, intestine, stomach and uterus.

It is found in the cytoplasm. It localises to the myofibril. Its subcellular location is the sarcomere. The protein resides in the cytoskeleton. In terms of biological role, required for proper contractility of visceral smooth muscle cells. Mediates nucleation of actin filaments. In Mus musculus (Mouse), this protein is Leiomodin-1 (Lmod1).